Reading from the N-terminus, the 293-residue chain is Ribosomal protein L11 methyltransferase (293 aa).

Residues Thr-145, Gly-166, Asp-188, and Asn-230 each coordinate S-adenosyl-L-methionine.

The protein belongs to the methyltransferase superfamily. PrmA family.

It is found in the cytoplasm. It carries out the reaction L-lysyl-[protein] + 3 S-adenosyl-L-methionine = N(6),N(6),N(6)-trimethyl-L-lysyl-[protein] + 3 S-adenosyl-L-homocysteine + 3 H(+). Methylates ribosomal protein L11. This Escherichia coli O7:K1 (strain IAI39 / ExPEC) protein is Ribosomal protein L11 methyltransferase.